Here is a 462-residue protein sequence, read N- to C-terminus: Alkaline ceramidase TOD1 (462 aa).

The Cytoplasmic segment spans residues 1–18 (MGKFITTTLSPPLYARSK). Residues 19-39 (LLCFSLLYLFSTIFLFLYVSL) form a helical membrane-spanning segment. The Lumenal segment spans residues 40-462 (SRNQCIFRYS…CKNYLTDMWG (423 aa)). N-linked (GlcNAc...) asparagine glycans are attached at residues Asn121, Asn132, and Asn449.

The protein belongs to the alkaline ceramidase family. Preferentially expressed in pollen grains, pollen tubes and silique guard cells, but barely detectable in roots, stems and leaves.

It localises to the golgi apparatus membrane. It carries out the reaction an N-acylsphing-4-enine + H2O = sphing-4-enine + a fatty acid. The protein operates within lipid metabolism. Endoplasmic reticulum ceramidase that catalyzes the hydrolysis of ceramides into sphingosine and free fatty acids at alkaline pH (e.g. pH 9.5). Inactive on phytoceramide. Involved in the regulation of turgor pressure in guard cells and pollen tubes. The polypeptide is Alkaline ceramidase TOD1 (Arabidopsis thaliana (Mouse-ear cress)).